Consider the following 101-residue polypeptide: UPF0213 protein lp_2058 (101 aa).

Positions 15-92 (KKYYFYVLLC…KHQSRAAKLK (78 aa)) constitute a GIY-YIG domain.

This sequence belongs to the UPF0213 family.

This chain is UPF0213 protein lp_2058, found in Lactiplantibacillus plantarum (strain ATCC BAA-793 / NCIMB 8826 / WCFS1) (Lactobacillus plantarum).